We begin with the raw amino-acid sequence, 397 residues long: Purine ribonucleoside efflux pump NepI (397 aa).

Over 1–21 (MNENIAEKFRADGVARPNWSA) the chain is Cytoplasmic. Residues 22 to 42 (VFAVAFCVACLITVEFLPVSL) form a helical membrane-spanning segment. The Periplasmic portion of the chain corresponds to 43 to 54 (LTPMAQDLGISE). The helical transmembrane segment at 55-75 (GVAGQSVTVTAFVAMFSSLFI) threads the bilayer. The Cytoplasmic portion of the chain corresponds to 76–85 (TQIIQATDRR). A helical transmembrane segment spans residues 86-106 (YIVILFAVLLTASCLMVSFAN). Position 107 (Ser107) is a topological domain, periplasmic. Residues 108–128 (FTLLLLGRACLGLALGGFWAM) form a helical membrane-spanning segment. Residues 129–147 (SASLTMRLVPARTVPKALS) are Cytoplasmic-facing. The chain crosses the membrane as a helical span at residues 148–168 (VIFGAVSIALVIAAPLGSFLG). Residues 169–175 (GIIGWRN) lie on the Periplasmic side of the membrane. Residues 176-196 (VFNAAAVMGVLCVIWVVKSLP) traverse the membrane as a helical segment. Residues 197–215 (SLPGEPSHQKQNMFSLLQR) lie on the Cytoplasmic side of the membrane. A helical transmembrane segment spans residues 216-236 (PGVMAGMIAIFMSFAGQFAFF). The Periplasmic portion of the chain corresponds to 237–255 (TYIRPVYMNLAGFDVDGLT). A helical transmembrane segment spans residues 256–276 (LVLLSFGIASFVGTSFSSYVL). The Cytoplasmic portion of the chain corresponds to 277-281 (KRSVK). The helical transmembrane segment at 282 to 302 (LALAGAPLLLALSALTLIVWG) threads the bilayer. Topologically, residues 303–305 (SDK) are periplasmic. The helical transmembrane segment at 306–326 (TVAAVIAIIWGLAFALVPVGW) threads the bilayer. The Cytoplasmic portion of the chain corresponds to 327 to 343 (STWITRSLADQAEKAGS). Residues 344 to 364 (IQVAVIQLANTCGAAVGGYAL) traverse the membrane as a helical segment. The Periplasmic portion of the chain corresponds to 365–366 (DN). Residues 367–387 (FGLLSPLALSGGLMLLTALVV) form a helical membrane-spanning segment. Topologically, residues 388–397 (AAKVRITPMS) are cytoplasmic.

It belongs to the major facilitator superfamily. DHA1 family. NepI (TC 2.A.1.2.26) subfamily.

It localises to the cell inner membrane. It carries out the reaction inosine(in) + H(+)(out) = inosine(out) + H(+)(in). The enzyme catalyses guanosine(in) + H(+)(out) = guanosine(out) + H(+)(in). In terms of biological role, involved in the efflux of purine ribonucleosides, such as inosine and guanosine. This is Purine ribonucleoside efflux pump NepI from Salmonella paratyphi B (strain ATCC BAA-1250 / SPB7).